The primary structure comprises 704 residues: Zinc finger protein MSN2 (704 aa).

Residues 84–246 (PSTTDNSLHL…SISNSNSNST (163 aa)) are disordered. Positions 91-112 (LHLKADSNKNRDARTIENDSEI) are enriched in basic and acidic residues. The span at 113–133 (KSTNNASGSGANQYTTLTSPY) shows a compositional bias: polar residues. Residues 141 to 166 (NMNNPLQSPSPSSVPQNPTINPPINT) show a composition bias toward low complexity. Composition is skewed to polar residues over residues 167–193 (ASNETNLSPQTSNGNETLISPRAQQHT) and 204–220 (NGANSNLFIDTNPNNLN). Low complexity predominate over residues 228 to 246 (NSDTNSYSNSISNSNSNST). A 9aaTAD motif is present at residues 261-269 (SMLDDYVSS). Phosphoserine occurs at positions 288 and 304. Residues 418–437 (NRVQHKQLTSSHNNSSTNMK) form a disordered region. The segment covering 426–437 (TSSHNNSSTNMK) has biased composition (polar residues). Phosphoserine is present on residues Ser451 and Ser582. Residues 592–634 (LTNQQNNISSSSVNSTGNGAGVTKERRPSYRRKSMTPSRRSSV) are disordered. The span at 593–608 (TNQQNNISSSSVNSTG) shows a compositional bias: low complexity. The residue at position 633 (Ser633) is a Phosphoserine. 2 consecutive C2H2-type zinc fingers follow at residues 647–665 (FHCHICPKSFKRSEHLKRH) and 676–698 (FACHICDKKFSRSDNLSQHIKTH).

As to quaternary structure, interacts with WHI2.

It is found in the cytoplasm. It localises to the nucleus. In terms of biological role, positive transcriptional factor that acts as a component of the stress responsive system. Recognizes and binds to the stress response element (STRE) which is involved in the response to various forms of stress (heat, oxidative, osmotic, etc.). Involved in the regulation of the CTT1, DDR2, HSP12 genes. May be regulated via WHI2-PSR1 complex phosphatase activity. The protein is Zinc finger protein MSN2 (MSN2) of Saccharomyces cerevisiae (strain ATCC 204508 / S288c) (Baker's yeast).